The following is a 123-amino-acid chain: Small ribosomal subunit protein uS13 (123 aa).

Residues 92–123 (HRRGLPVRGQKTKTNARTRKGPKKLVVSRKKK) form a disordered region.

The protein belongs to the universal ribosomal protein uS13 family. In terms of assembly, part of the 30S ribosomal subunit. Forms a loose heterodimer with protein S19. Forms two bridges to the 50S subunit in the 70S ribosome.

Functionally, located at the top of the head of the 30S subunit, it contacts several helices of the 16S rRNA. In the 70S ribosome it contacts the 23S rRNA (bridge B1a) and protein L5 of the 50S subunit (bridge B1b), connecting the 2 subunits; these bridges are implicated in subunit movement. Contacts the tRNAs in the A and P-sites. This is Small ribosomal subunit protein uS13 from Clostridium tetani (strain Massachusetts / E88).